The chain runs to 140 residues: Lymphocyte antigen 6H (140 aa).

The first 25 residues, 1–25, serve as a signal peptide directing secretion; the sequence is MLPAAMKGLGLALLAVLLCSAPAHG. A UPAR/Ly6 domain is found at 26 to 91; sequence LWCQDCTLTT…RHFFSDYLMG (66 aa). 5 disulfides stabilise this stretch: cysteine 28-cysteine 52, cysteine 31-cysteine 40, cysteine 45-cysteine 73, cysteine 77-cysteine 104, and cysteine 105-cysteine 110. Asparagine 36 is a glycosylation site (N-linked (GlcNAc...) asparagine). Glycine 115 carries the GPI-anchor amidated glycine lipid modification. Residues 116 to 140 constitute a propeptide, removed in mature form; that stretch reads AGHSPWALAGGLLLSLGPALLWAGP.

In terms of assembly, interacts with CHRNA4 and CHRNA7. As to expression, highly expressed in brain (cerebral cortex, amygdala, hippocampus and subthalamic nucleus) and in acute human leukemic cell line MOLT-3. Also found in lower levels in testis, pancreas, small intestine and colon.

It is found in the cell membrane. Believed to act as a modulator of nicotinic acetylcholine receptors (nAChRs) activity. In vitro inhibits alpha-3:beta-4-containing nAChRs maximum response. May play a role in the intracellular trafficking of alpha-7-containing nAChRs and may inhibit their expression at the cell surface. Seems to inhibit alpha-7/CHRNA7 signaling in hippocampal neurons. In Homo sapiens (Human), this protein is Lymphocyte antigen 6H (LY6H).